The following is a 155-amino-acid chain: Ribosome maturation factor RimP (155 aa).

This sequence belongs to the RimP family.

It is found in the cytoplasm. In terms of biological role, required for maturation of 30S ribosomal subunits. In Listeria monocytogenes serovar 1/2a (strain ATCC BAA-679 / EGD-e), this protein is Ribosome maturation factor RimP.